Consider the following 422-residue polypeptide: Enolase (422 aa).

Gln-161 is a binding site for (2R)-2-phosphoglycerate. The Proton donor role is filled by Glu-203. Asp-240, Glu-283, and Asp-310 together coordinate Mg(2+). (2R)-2-phosphoglycerate contacts are provided by Lys-335, Arg-364, Ser-365, and Lys-386. Lys-335 serves as the catalytic Proton acceptor.

The protein belongs to the enolase family. The cofactor is Mg(2+).

Its subcellular location is the cytoplasm. The protein resides in the secreted. The protein localises to the cell surface. It carries out the reaction (2R)-2-phosphoglycerate = phosphoenolpyruvate + H2O. It participates in carbohydrate degradation; glycolysis; pyruvate from D-glyceraldehyde 3-phosphate: step 4/5. In terms of biological role, catalyzes the reversible conversion of 2-phosphoglycerate (2-PG) into phosphoenolpyruvate (PEP). It is essential for the degradation of carbohydrates via glycolysis. The protein is Enolase of Deinococcus radiodurans (strain ATCC 13939 / DSM 20539 / JCM 16871 / CCUG 27074 / LMG 4051 / NBRC 15346 / NCIMB 9279 / VKM B-1422 / R1).